Here is a 391-residue protein sequence, read N- to C-terminus: Chaperone protein DnaJ (391 aa).

A J domain is found at 2-67; the sequence is DYYDVLGVSK…QKRESYDRYG (66 aa). Residues 148 to 226 form a CR-type zinc finger; sequence GVKKELLVSG…CRGQGRIKDK (79 aa). 8 residues coordinate Zn(2+): cysteine 161, cysteine 164, cysteine 178, cysteine 181, cysteine 200, cysteine 203, cysteine 214, and cysteine 217. CXXCXGXG motif repeat units follow at residues 161-168, 178-185, 200-207, and 214-221; these read CETCSGSG, CDRCKGSG, CPECGGEG, and CSSCRGQG.

This sequence belongs to the DnaJ family. In terms of assembly, homodimer. It depends on Zn(2+) as a cofactor.

It is found in the cytoplasm. In terms of biological role, participates actively in the response to hyperosmotic and heat shock by preventing the aggregation of stress-denatured proteins and by disaggregating proteins, also in an autonomous, DnaK-independent fashion. Unfolded proteins bind initially to DnaJ; upon interaction with the DnaJ-bound protein, DnaK hydrolyzes its bound ATP, resulting in the formation of a stable complex. GrpE releases ADP from DnaK; ATP binding to DnaK triggers the release of the substrate protein, thus completing the reaction cycle. Several rounds of ATP-dependent interactions between DnaJ, DnaK and GrpE are required for fully efficient folding. Also involved, together with DnaK and GrpE, in the DNA replication of plasmids through activation of initiation proteins. The sequence is that of Chaperone protein DnaJ from Chlamydia abortus (strain DSM 27085 / S26/3) (Chlamydophila abortus).